The following is a 177-amino-acid chain: Putative fimbrin-like protein FimI (177 aa).

Positions 1–19 are cleaved as a signal peptide; sequence MIRKGAALVGLVLMSPVIA. Cysteine 40 and cysteine 81 are disulfide-bonded.

The protein belongs to the fimbrial protein family.

The protein resides in the fimbrium. This is Putative fimbrin-like protein FimI (fimI) from Salmonella typhi.